Reading from the N-terminus, the 371-residue chain is Methylthioribose-1-phosphate isomerase (371 aa).

Substrate contacts are provided by residues 53–55 (RGA), Arg-90, and Gln-203. Asp-243 (proton donor) is an active-site residue. 253–254 (NK) serves as a coordination point for substrate.

Belongs to the eIF-2B alpha/beta/delta subunits family. MtnA subfamily.

It catalyses the reaction 5-(methylsulfanyl)-alpha-D-ribose 1-phosphate = 5-(methylsulfanyl)-D-ribulose 1-phosphate. It carries out the reaction 5-deoxy-alpha-D-ribose 1-phosphate = 5-deoxy-D-ribulose 1-phosphate. The protein operates within amino-acid biosynthesis; L-methionine biosynthesis via salvage pathway; L-methionine from S-methyl-5-thio-alpha-D-ribose 1-phosphate: step 1/6. In terms of biological role, catalyzes the interconversion of methylthioribose-1-phosphate (MTR-1-P) into methylthioribulose-1-phosphate (MTRu-1-P). Also catalyzes the interconversion of 5-deoxyribose 1-phosphate and 5-deoxyribulose 1-phosphate. Part of a bifunctional DHAP-shunt salvage pathway for SAM by-products. The polypeptide is Methylthioribose-1-phosphate isomerase (Escherichia coli O45:K1 (strain S88 / ExPEC)).